A 401-amino-acid chain; its full sequence is Imidazolonepropionase (401 aa).

His66 and His68 together coordinate Fe(3+). Zn(2+) contacts are provided by His66 and His68. Arg75, Tyr138, and His171 together coordinate 4-imidazolone-5-propanoate. Tyr138 contacts N-formimidoyl-L-glutamate. His236 lines the Fe(3+) pocket. His236 is a Zn(2+) binding site. Residue Gln239 coordinates 4-imidazolone-5-propanoate. Asp311 lines the Fe(3+) pocket. Zn(2+) is bound at residue Asp311. The N-formimidoyl-L-glutamate site is built by Asn313 and Gly315. Thr316 is a 4-imidazolone-5-propanoate binding site.

It belongs to the metallo-dependent hydrolases superfamily. HutI family. Requires Zn(2+) as cofactor. Fe(3+) is required as a cofactor.

The protein localises to the cytoplasm. It carries out the reaction 4-imidazolone-5-propanoate + H2O = N-formimidoyl-L-glutamate. It functions in the pathway amino-acid degradation; L-histidine degradation into L-glutamate; N-formimidoyl-L-glutamate from L-histidine: step 3/3. In terms of biological role, catalyzes the hydrolytic cleavage of the carbon-nitrogen bond in imidazolone-5-propanoate to yield N-formimidoyl-L-glutamate. It is the third step in the universal histidine degradation pathway. The polypeptide is Imidazolonepropionase (Pseudomonas savastanoi pv. phaseolicola (strain 1448A / Race 6) (Pseudomonas syringae pv. phaseolicola (strain 1448A / Race 6))).